Reading from the N-terminus, the 126-residue chain is Large ribosomal subunit protein bL17 (126 aa).

It belongs to the bacterial ribosomal protein bL17 family. Part of the 50S ribosomal subunit. Contacts protein L32.

This Aliivibrio salmonicida (strain LFI1238) (Vibrio salmonicida (strain LFI1238)) protein is Large ribosomal subunit protein bL17.